A 233-amino-acid polypeptide reads, in one-letter code: Large ribosomal subunit protein uL1 (233 aa).

The protein belongs to the universal ribosomal protein uL1 family. Part of the 50S ribosomal subunit.

Functionally, binds directly to 23S rRNA. Forms the L1 stalk. Unlike the case in the Thermus thermophilus 70S ribosome, this protein is not seen to block the exit path of the E site tRNA. It is clear that the protein in the structure is flexible however, so this is probably due to its position in these crystals. Protein L1 is also a translational repressor protein, it controls the translation of the L11 operon by binding to its mRNA. The sequence is that of Large ribosomal subunit protein uL1 (rplA) from Deinococcus radiodurans (strain ATCC 13939 / DSM 20539 / JCM 16871 / CCUG 27074 / LMG 4051 / NBRC 15346 / NCIMB 9279 / VKM B-1422 / R1).